A 219-amino-acid chain; its full sequence is Cytidylate kinase (219 aa).

10–18 (GPAAAGKST) contributes to the ATP binding site.

Belongs to the cytidylate kinase family. Type 1 subfamily.

It localises to the cytoplasm. The enzyme catalyses CMP + ATP = CDP + ADP. It carries out the reaction dCMP + ATP = dCDP + ADP. The chain is Cytidylate kinase from Staphylococcus aureus (strain MRSA252).